The following is a 99-amino-acid chain: Small ribosomal subunit protein uS17 (99 aa).

This sequence belongs to the universal ribosomal protein uS17 family. As to quaternary structure, part of the 30S ribosomal subunit.

One of the primary rRNA binding proteins, it binds specifically to the 5'-end of 16S ribosomal RNA. The polypeptide is Small ribosomal subunit protein uS17 (Thermosipho melanesiensis (strain DSM 12029 / CIP 104789 / BI429)).